Consider the following 128-residue polypeptide: S-adenosylmethionine decarboxylase proenzyme (128 aa).

Residue Ser-61 is the Schiff-base intermediate with substrate; via pyruvic acid of the active site. Position 61 is a pyruvic acid (Ser); by autocatalysis (Ser-61). Residue His-66 is the Proton acceptor; for processing activity of the active site. Cys-81 (proton donor; for catalytic activity) is an active-site residue.

Belongs to the prokaryotic AdoMetDC family. Type 1 subfamily. As to quaternary structure, heterotetramer of two alpha and two beta chains arranged as a dimer of alpha/beta heterodimers. Pyruvate is required as a cofactor. In terms of processing, is synthesized initially as an inactive proenzyme. Formation of the active enzyme involves a self-maturation process in which the active site pyruvoyl group is generated from an internal serine residue via an autocatalytic post-translational modification. Two non-identical subunits are generated from the proenzyme in this reaction, and the pyruvate is formed at the N-terminus of the alpha chain, which is derived from the carboxyl end of the proenzyme. The post-translation cleavage follows an unusual pathway, termed non-hydrolytic serinolysis, in which the side chain hydroxyl group of the serine supplies its oxygen atom to form the C-terminus of the beta chain, while the remainder of the serine residue undergoes an oxidative deamination to produce ammonia and the pyruvoyl group blocking the N-terminus of the alpha chain.

It carries out the reaction S-adenosyl-L-methionine + H(+) = S-adenosyl 3-(methylsulfanyl)propylamine + CO2. It participates in amine and polyamine biosynthesis; S-adenosylmethioninamine biosynthesis; S-adenosylmethioninamine from S-adenosyl-L-methionine: step 1/1. In terms of biological role, catalyzes the decarboxylation of S-adenosylmethionine to S-adenosylmethioninamine (dcAdoMet), the propylamine donor required for the synthesis of the polyamines spermine and spermidine from the diamine putrescine. This is S-adenosylmethionine decarboxylase proenzyme from Parasynechococcus marenigrum (strain WH8102).